Here is a 711-residue protein sequence, read N- to C-terminus: Protein Smaug homolog 1 (711 aa).

Position 168 is a phosphoserine (Ser-168). Residues 278–323 (ARGPQCLPSDHAPLSPQSSVASSGSGGSEHLEDQTTARNTFQEEGS) are disordered. One can recognise an SAM domain in the interval 323-396 (SGMKDVPAWL…LKSLERDIIE (74 aa)). Residue Ser-420 is modified to Phosphoserine. 2 disordered regions span residues 422-448 (STTP…SAAA) and 565-588 (NRGF…GRRN). Thr-424 carries the phosphothreonine modification. Position 566 is an omega-N-methylarginine (Arg-566). Over residues 568-581 (FGQSNSLPTASSVG) the composition is skewed to polar residues. Phosphoserine is present on Ser-573.

This sequence belongs to the SMAUG family. Expressed in brain (at protein level).

Its subcellular location is the cytoplasm. It is found in the cell projection. The protein localises to the dendrite. It localises to the synapse. The protein resides in the synaptosome. Acts as a translational repressor of SRE-containing messengers. The sequence is that of Protein Smaug homolog 1 (Samd4a) from Mus musculus (Mouse).